Consider the following 506-residue polypeptide: GMP synthase [glutamine-hydrolyzing] (506 aa).

A Glutamine amidotransferase type-1 domain is found at 3–188; sequence GFVILDFGSQ…AQGMCKAPAD (186 aa). C80 serves as the catalytic Nucleophile. Catalysis depends on residues H162 and E164. Positions 189–381 constitute a GMPS ATP-PPase domain; that stretch reads WDAPHIKDIL…LGLPKEMLWR (193 aa). Residue 217–223 coordinates ATP; the sequence is SGGVDST.

Homodimer.

The catalysed reaction is XMP + L-glutamine + ATP + H2O = GMP + L-glutamate + AMP + diphosphate + 2 H(+). It participates in purine metabolism; GMP biosynthesis; GMP from XMP (L-Gln route): step 1/1. Catalyzes the synthesis of GMP from XMP. In Bdellovibrio bacteriovorus (strain ATCC 15356 / DSM 50701 / NCIMB 9529 / HD100), this protein is GMP synthase [glutamine-hydrolyzing].